We begin with the raw amino-acid sequence, 178 residues long: Mediator of RNA polymerase II transcription subunit 28 (178 aa).

Positions 1–25 (MAAPLGGMFSGQQPGPPQPPPGLLG) are disordered. Positions 109 to 145 (QVIKEDVSELRNELQRKDALVQKHLTKLRHWQQVLED) form a coiled coil.

This sequence belongs to the Mediator complex subunit 28 family. In terms of assembly, component of the Mediator complex, which is composed of MED1, MED4, MED6, MED7, MED8, MED9, MED10, MED11, MED12, MED13, MED13L, MED14, MED15, MED16, MED17, MED18, MED19, MED20, MED21, MED22, MED23, MED24, MED25, MED26, MED27, MED29, MED30, MED31, CCNC, CDK8 and CDC2L6/CDK11. The MED12, MED13, CCNC and CDK8 subunits form a distinct module termed the CDK8 module. Mediator containing the CDK8 module is less active than Mediator lacking this module in supporting transcriptional activation. Individual preparations of the Mediator complex lacking one or more distinct subunits have been variously termed ARC, CRSP, DRIP, PC2, SMCC and TRAP. Forms a ternary complex with NF2/merlin and GRB2. Binds to actin.

The protein resides in the nucleus. It localises to the cytoplasm. Its subcellular location is the membrane. Functionally, component of the Mediator complex, a coactivator involved in the regulated transcription of nearly all RNA polymerase II-dependent genes. Mediator functions as a bridge to convey information from gene-specific regulatory proteins to the basal RNA polymerase II transcription machinery. Mediator is recruited to promoters by direct interactions with regulatory proteins and serves as a scaffold for the assembly of a functional preinitiation complex with RNA polymerase II and the general transcription factors. May be part of a complex containing NF2/merlin that participates in cellular signaling to the actin cytoskeleton downstream of tyrosine kinase signaling pathways. The sequence is that of Mediator of RNA polymerase II transcription subunit 28 (MED28) from Bos taurus (Bovine).